Consider the following 163-residue polypeptide: ATP synthase subunit b 1 (163 aa).

A helical membrane pass occupies residues 7–27; the sequence is AETWVAIAFVILMGIFAYLGV.

It belongs to the ATPase B chain family. In terms of assembly, F-type ATPases have 2 components, F(1) - the catalytic core - and F(0) - the membrane proton channel. F(1) has five subunits: alpha(3), beta(3), gamma(1), delta(1), epsilon(1). F(0) has three main subunits: a(1), b(2) and c(10-14). The alpha and beta chains form an alternating ring which encloses part of the gamma chain. F(1) is attached to F(0) by a central stalk formed by the gamma and epsilon chains, while a peripheral stalk is formed by the delta and b chains.

The protein localises to the cell inner membrane. Functionally, f(1)F(0) ATP synthase produces ATP from ADP in the presence of a proton or sodium gradient. F-type ATPases consist of two structural domains, F(1) containing the extramembraneous catalytic core and F(0) containing the membrane proton channel, linked together by a central stalk and a peripheral stalk. During catalysis, ATP synthesis in the catalytic domain of F(1) is coupled via a rotary mechanism of the central stalk subunits to proton translocation. Its function is as follows. Component of the F(0) channel, it forms part of the peripheral stalk, linking F(1) to F(0). This is ATP synthase subunit b 1 from Rhodopseudomonas palustris (strain HaA2).